A 273-amino-acid chain; its full sequence is MALNSINTNSGALIALQNLNSTNAELTQVQQRINTGKKIGSAKDNGAIWATAKNQSATANSMNAVKDSLQRGQSTIDVALAAGDTITDLLGKMKEKALAASDTSLNTASFNALKSDFDSLRDQITKAASNAKFNGVSIANGSTAKLTFLANSDGSGFTVTAKTLTLTGLGLTASSTFTTAAAAKTMIGTIDTALQTATNKLASLGTSSTGLDTHLTFVGKLQDSLDAGVGNLVDADLAKESAKLQSLQTKQQLGVQALSIANSSSSAILSLFR.

Belongs to the bacterial flagellin family. In C.crescentus, the flagellar filament is composed of multiple flagellins of 29 kDa; 27 kDa and 25 kDa.

It localises to the secreted. The protein localises to the bacterial flagellum. Its function is as follows. Flagellin is the subunit protein which polymerizes to form the filaments of bacterial flagella. This is Flagellin FljN (fljN) from Caulobacter vibrioides (strain ATCC 19089 / CIP 103742 / CB 15) (Caulobacter crescentus).